Consider the following 405-residue polypeptide: Tyrosine--tRNA ligase (405 aa).

The 'HIGH' region signature appears at 48–57; the sequence is PTAPDLHLGH. The short motif at 232–236 is the 'KMSKS' region element; that stretch reads KMSKS. Position 235 (K235) interacts with ATP. An S4 RNA-binding domain is found at 343–404; that stretch reads IWLPKLLADA…GKRRFVKVIF (62 aa).

The protein belongs to the class-I aminoacyl-tRNA synthetase family. TyrS type 2 subfamily. As to quaternary structure, homodimer.

The protein resides in the cytoplasm. It catalyses the reaction tRNA(Tyr) + L-tyrosine + ATP = L-tyrosyl-tRNA(Tyr) + AMP + diphosphate + H(+). In terms of biological role, catalyzes the attachment of tyrosine to tRNA(Tyr) in a two-step reaction: tyrosine is first activated by ATP to form Tyr-AMP and then transferred to the acceptor end of tRNA(Tyr). This is Tyrosine--tRNA ligase from Desulfotalea psychrophila (strain LSv54 / DSM 12343).